The chain runs to 1097 residues: Putative regulator of nonsense transcripts 1 (1097 aa).

Positions 42 to 53 are enriched in low complexity; it reads SQTQTQGHTQSQ. The tract at residues 42 to 67 is disordered; it reads SQTQTQGHTQSQLDNQLNGPDDGLHN. Residues 96–254 form the Upf1 CH-rich domain; sequence TKDLPVHACR…NKLEELWKDN (159 aa). The Zn(2+) site is built by Cys104, Cys108, Cys119, Ser122, Cys127, His137, His141, Cys147, Cys165, Cys168, Cys191, and Cys195. Positions 104–137 are C3H; it reads CRSYCGIHDPACVVYCNTSKKWFCNGRGNTSGSH. Positions 119-147 are CC/SHH/C; it reads CNTSKKWFCNGRGNTSGSHIVNHLVRAKC. Residues 165-195 form a C4 region; that stretch reads CYNCGCRNVFLLGFIPAKADSVVVLLCRQPC. ATP is bound by residues Gln457, 474 to 481, Tyr683, and Glu813; that span reads GPPGTGKT. The tract at residues 977–998 is disordered; sequence QGQTNGPAAGRGAMKGKSGRGG.

The protein belongs to the DNA2/NAM7 helicase family.

The protein localises to the cytoplasm. The protein resides in the P-body. The catalysed reaction is ATP + H2O = ADP + phosphate + H(+). RNA-dependent helicase required for nonsense-mediated decay (NMD) of aberrant mRNAs containing premature stop codons and modulates the expression level of normal mRNAs. The formation of an rent1-rent2-rent3 surveillance complex is believed to activate NMD. The sequence is that of Putative regulator of nonsense transcripts 1 (rent1) from Takifugu rubripes (Japanese pufferfish).